The chain runs to 25 residues: Caerin-1.2 (25 aa).

The residue at position 25 (Leu25) is a Leucine amide.

In terms of tissue distribution, expressed by the skin parotoid and/or rostral glands.

The protein resides in the secreted. In terms of biological role, antibacterial peptide, that adopts an alpha helical conformation which can disrupt bacterial membranes. Each caerin displays a different antimicrobial specificity. The protein is Caerin-1.2 of Ranoidea caerulea (Green tree frog).